Consider the following 761-residue polypeptide: Pleckstrin homology domain-containing family M member 3 (761 aa).

The residue at position 132 (Ser132) is a Phosphoserine. 2 consecutive PH domains span residues 211 to 308 (NILK…EVVH) and 361 to 456 (NILK…IAAN). The Phorbol-ester/DAG-type zinc-finger motif lies at 669–722 (SHVYSCSLCSQKGFICEICNNGEILYPFEDISTSRCESCGAVFHSECKEKSVPC).

As to quaternary structure, interacts with AKT1.

The protein resides in the cytoplasm. The protein localises to the golgi apparatus. Its subcellular location is the cell membrane. Its function is as follows. Involved in skeletal muscle differentiation. May act as a scaffold protein for AKT1 during muscle differentiation. In Homo sapiens (Human), this protein is Pleckstrin homology domain-containing family M member 3.